Consider the following 352-residue polypeptide: Protein RecA (352 aa).

Residue 65–72 (GPESSGKT) participates in ATP binding. The disordered stretch occupies residues 332 to 352 (EEVEKADVKKDAKKDAAEALK). Residues 333–352 (EVEKADVKKDAKKDAAEALK) show a composition bias toward basic and acidic residues.

The protein belongs to the RecA family.

Its subcellular location is the cytoplasm. Functionally, can catalyze the hydrolysis of ATP in the presence of single-stranded DNA, the ATP-dependent uptake of single-stranded DNA by duplex DNA, and the ATP-dependent hybridization of homologous single-stranded DNAs. It interacts with LexA causing its activation and leading to its autocatalytic cleavage. This chain is Protein RecA, found in Photobacterium profundum (strain SS9).